A 210-amino-acid chain; its full sequence is Peptidyl-tRNA hydrolase (210 aa).

TRNA is bound at residue tyrosine 15. Histidine 20 (proton acceptor) is an active-site residue. Phenylalanine 66, asparagine 68, and asparagine 114 together coordinate tRNA. The disordered stretch occupies residues 186-210 (IHTSKPPRPKPPRREPGDGGTPATA).

The protein belongs to the PTH family. Monomer.

It is found in the cytoplasm. The enzyme catalyses an N-acyl-L-alpha-aminoacyl-tRNA + H2O = an N-acyl-L-amino acid + a tRNA + H(+). Hydrolyzes ribosome-free peptidyl-tRNAs (with 1 or more amino acids incorporated), which drop off the ribosome during protein synthesis, or as a result of ribosome stalling. In terms of biological role, catalyzes the release of premature peptidyl moieties from peptidyl-tRNA molecules trapped in stalled 50S ribosomal subunits, and thus maintains levels of free tRNAs and 50S ribosomes. This is Peptidyl-tRNA hydrolase from Variovorax paradoxus (strain S110).